A 442-amino-acid chain; its full sequence is 3-phosphoshikimate 1-carboxyvinyltransferase (442 aa).

3 residues coordinate 3-phosphoshikimate: K25, S26, and R30. K25 contributes to the phosphoenolpyruvate binding site. G97 and R125 together coordinate phosphoenolpyruvate. S170, S171, Q172, D323, and K350 together coordinate 3-phosphoshikimate. Residue Q172 coordinates phosphoenolpyruvate. Residue D323 is the Proton acceptor of the active site. Phosphoenolpyruvate contacts are provided by R354 and R399.

It belongs to the EPSP synthase family. Monomer.

It is found in the cytoplasm. It catalyses the reaction 3-phosphoshikimate + phosphoenolpyruvate = 5-O-(1-carboxyvinyl)-3-phosphoshikimate + phosphate. The protein operates within metabolic intermediate biosynthesis; chorismate biosynthesis; chorismate from D-erythrose 4-phosphate and phosphoenolpyruvate: step 6/7. Catalyzes the transfer of the enolpyruvyl moiety of phosphoenolpyruvate (PEP) to the 5-hydroxyl of shikimate-3-phosphate (S3P) to produce enolpyruvyl shikimate-3-phosphate and inorganic phosphate. This Bartonella tribocorum (strain CIP 105476 / IBS 506) protein is 3-phosphoshikimate 1-carboxyvinyltransferase.